The primary structure comprises 2610 residues: E3 ubiquitin-protein ligase HECTD1 (2610 aa).

The tract at residues 246–269 is disordered; the sequence is TVSGPSSACKPGRSTTGAPSTTAD. Residues 258–269 show a composition bias toward polar residues; that stretch reads RSTTGAPSTTAD. ANK repeat units follow at residues 395–424, 426–455, 459–491, and 579–612; these read VGQT…DVNR, QRSS…NPDL, DGKT…PVNK, and ITAT…DIFL. The segment at 489–513 is disordered; it reads VNKGDDKKKKDTNKDEEECNEPKGD. A compositionally biased stretch (basic and acidic residues) spans 491 to 501; the sequence is KGDDKKKKDTN. Disordered stretches follow at residues 627-657 and 707-748; these read LAGP…ELQQ and SSGS…LSAP. Residues Ser631 and Ser640 each carry the phosphoserine modification. Residues 639 to 657 are compositionally biased toward basic and acidic residues; it reads ESKPEKEDEPQEDAKELQQ. Residues 707–717 show a composition bias toward low complexity; the sequence is SSGSPEGGSDS. Positions 718-729 are enriched in basic and acidic residues; sequence SESRSEFLEKLQ. Residues 1266 to 1338 form the MIB/HERC2 domain; that stretch reads VRSQVLKYMV…KFDLKLAPGY (73 aa). Disordered regions lie at residues 1343–1406 and 1433–1483; these read VASP…KTER and ENVP…SMGI. The span at 1348 to 1365 shows a compositional bias: polar residues; sequence PVSSTVSGTTQSWSSLVK. Low complexity-rich tracts occupy residues 1373-1395 and 1441-1458; these read SAAA…ASSS and GSSS…TGSE. A Phosphoserine modification is found at Ser1384. Polar residues predominate over residues 1469–1479; it reads SVRTPGESSAI. The residue at position 1488 (Ser1488) is a Phosphoserine. Residues 1496-1515 are disordered; that stretch reads ELTNKEAASQRPLSSSASNR. At Ser1567 the chain carries Phosphoserine. Disordered regions lie at residues 1592–1611 and 1674–1757; these read GAQS…VTMS and ELDD…KGGR. The span at 1600–1611 shows a compositional bias: low complexity; it reads TTPGTTSTVTMS. Over residues 1674–1703 the composition is skewed to acidic residues; sequence ELDDDEDLPEPDEEDDENEDDNQEDQEYEE. At Thr1760 the chain carries Phosphothreonine. Ser1772 is modified (phosphoserine). The disordered stretch occupies residues 1777 to 1797; that stretch reads AFDPRPGRTNVQQTTDLEIPP. Residues 2029–2103 are K-box; it reads FTFPPDEFTS…AIVWLQNRRE (75 aa). In terms of domain architecture, HECT spans 2151 to 2610; the sequence is IHADRKSVLE…ATMEKGFHLN (460 aa). The tract at residues 2297–2318 is disordered; that stretch reads HCTESQSEASTEEGHDSLSVGS. A Phosphoserine modification is found at Ser2318. The active-site Glycyl thioester intermediate is the Cys2579.

Belongs to the UPL family. K-HECT subfamily. As to quaternary structure, interacts with IGSF1.

It carries out the reaction S-ubiquitinyl-[E2 ubiquitin-conjugating enzyme]-L-cysteine + [acceptor protein]-L-lysine = [E2 ubiquitin-conjugating enzyme]-L-cysteine + N(6)-ubiquitinyl-[acceptor protein]-L-lysine.. It functions in the pathway protein modification; protein ubiquitination. E3 ubiquitin-protein ligase which accepts ubiquitin from an E2 ubiquitin-conjugating enzyme in the form of a thioester and then directly transfers the ubiquitin to targeted substrates. Mediates 'Lys-63'-linked polyubiquitination of HSP90AA1 which leads to its intracellular localization and reduced secretion. Negatively regulating HSP90AA1 secretion in cranial mesenchyme cells may impair their emigration and may be essential for the correct development of the cranial neural folds and neural tube closure. Catalyzes ubiquitination and degradation of ZNF622, an assembly factor for the ribosomal 60S subunit, in hematopoietic cells, thereby promoting hematopoietic stem cell renewal. The chain is E3 ubiquitin-protein ligase HECTD1 from Homo sapiens (Human).